We begin with the raw amino-acid sequence, 209 residues long: Hydrogenase expression/formation protein HupM (209 aa).

Residues Glu21, Asp67, and His98 each coordinate Ni(2+).

It belongs to the peptidase A31 family.

Not known. Could be involved in the processing of hydrogenase. This Azotobacter chroococcum mcd 1 protein is Hydrogenase expression/formation protein HupM (hupM).